We begin with the raw amino-acid sequence, 87 residues long: U3-theraphotoxin-Hhn1p (87 aa).

The signal sequence occupies residues 1–24; that stretch reads MVNMKASMFLTFAGLVLLFVVCYA. Residues 25 to 52 constitute a propeptide that is removed on maturation; the sequence is SESEEKEFPKEMLSSIFAVDNDFKQEER. Disulfide bonds link C54–C67, C61–C72, and C66–C79.

Belongs to the neurotoxin 10 (Hwtx-1) family. 51 (Hntx-8) subfamily. Hntx-8 sub-subfamily. Expressed by the venom gland.

The protein localises to the secreted. In terms of biological role, ion channel inhibitor. This Cyriopagopus hainanus (Chinese bird spider) protein is U3-theraphotoxin-Hhn1p.